The primary structure comprises 190 residues: Peptidyl-tRNA hydrolase (190 aa).

Tyr14 lines the tRNA pocket. His19 serves as the catalytic Proton acceptor. TRNA contacts are provided by Tyr64, Asn66, and Asn113.

It belongs to the PTH family. In terms of assembly, monomer.

It localises to the cytoplasm. The catalysed reaction is an N-acyl-L-alpha-aminoacyl-tRNA + H2O = an N-acyl-L-amino acid + a tRNA + H(+). In terms of biological role, hydrolyzes ribosome-free peptidyl-tRNAs (with 1 or more amino acids incorporated), which drop off the ribosome during protein synthesis, or as a result of ribosome stalling. Functionally, catalyzes the release of premature peptidyl moieties from peptidyl-tRNA molecules trapped in stalled 50S ribosomal subunits, and thus maintains levels of free tRNAs and 50S ribosomes. The polypeptide is Peptidyl-tRNA hydrolase (Gemmatimonas aurantiaca (strain DSM 14586 / JCM 11422 / NBRC 100505 / T-27)).